Consider the following 329-residue polypeptide: Cytosolic arginine sensor for mTORC1 subunit 1 (329 aa).

At Ser14 the chain carries Phosphoserine; by PKB/AKT1. 2 ACT domains span residues 72–138 (AEAT…HTLA) and 260–321 (GELW…EVLQ). L-arginine is bound by residues 111 to 112 (SV), Gly274, 280 to 281 (IV), and 300 to 304 (TFNFD).

It belongs to the GATS family. Forms homodimers and heterodimers with CASTOR2. Interacts with the GATOR2 complex which is composed of MIOS, SEC13, SEH1L, WDR24 and WDR59; the interaction is negatively regulated by arginine. Interacts with TM4SF5; the interaction is positively regulated by leucine and is negatively regulated by arginine. Post-translationally, phosphorylation at Ser-14 by AKT1, promoting the interaction between CASTOR1 and RNF167. In terms of processing, ubiquitinated by RNF167 via 'Lys-29'-polyubiquitination, leading to its degradation, releasing the GATOR2 complex. Ubiquitination by RNF167 is promoted by phosphorylation at Ser-14 by AKT1. Widely expressed.

Its subcellular location is the cytoplasm. The protein resides in the cytosol. Functionally, functions as an intracellular arginine sensor within the amino acid-sensing branch of the TORC1 signaling pathway. As a homodimer or a heterodimer with CASTOR2, binds and inhibits the GATOR subcomplex GATOR2 and thereby mTORC1. Binding of arginine to CASTOR1 allosterically disrupts the interaction of CASTOR1-containing dimers with GATOR2 which can in turn activate mTORC1 and the TORC1 signaling pathway. This is Cytosolic arginine sensor for mTORC1 subunit 1 from Homo sapiens (Human).